Consider the following 89-residue polypeptide: Large ribosomal subunit protein bL27 (89 aa).

The segment at 1–21 (MAHKKAGGSSRNGRDSQSKRL) is disordered.

This sequence belongs to the bacterial ribosomal protein bL27 family.

This is Large ribosomal subunit protein bL27 from Rhizobium rhizogenes (strain K84 / ATCC BAA-868) (Agrobacterium radiobacter).